The primary structure comprises 228 residues: Cytidylate kinase (228 aa).

Residue 17 to 25 (GPTASGKGT) participates in ATP binding.

Belongs to the cytidylate kinase family. Type 1 subfamily.

It is found in the cytoplasm. The enzyme catalyses CMP + ATP = CDP + ADP. It carries out the reaction dCMP + ATP = dCDP + ADP. The protein is Cytidylate kinase of Burkholderia cenocepacia (strain HI2424).